A 379-amino-acid polypeptide reads, in one-letter code: Sulfate adenylyltransferase (379 aa).

The protein belongs to the sulfate adenylyltransferase family.

It carries out the reaction sulfate + ATP + H(+) = adenosine 5'-phosphosulfate + diphosphate. It participates in sulfur metabolism; hydrogen sulfide biosynthesis; sulfite from sulfate: step 1/3. The polypeptide is Sulfate adenylyltransferase (Thermococcus onnurineus (strain NA1)).